The following is a 260-amino-acid chain: UPF0246 protein Bamb_2261 (260 aa).

The protein belongs to the UPF0246 family.

The protein is UPF0246 protein Bamb_2261 of Burkholderia ambifaria (strain ATCC BAA-244 / DSM 16087 / CCUG 44356 / LMG 19182 / AMMD) (Burkholderia cepacia (strain AMMD)).